We begin with the raw amino-acid sequence, 347 residues long: GMP reductase (347 aa).

108–131 is a binding site for NADP(+); it reads AEFEKVKKIMALSEEFVFICIDIA. K(+) is bound by residues Gly181 and Gly183. Residue Cys186 is the Thioimidate intermediate of the active site. NADP(+) is bound at residue 216 to 239; the sequence is IIGDGGCSCAGDVSKAFGGGADFV.

Belongs to the IMPDH/GMPR family. GuaC type 1 subfamily. Homotetramer.

It carries out the reaction IMP + NH4(+) + NADP(+) = GMP + NADPH + 2 H(+). Its function is as follows. Catalyzes the irreversible NADPH-dependent deamination of GMP to IMP. It functions in the conversion of nucleobase, nucleoside and nucleotide derivatives of G to A nucleotides, and in maintaining the intracellular balance of A and G nucleotides. In Vibrio atlanticus (strain LGP32) (Vibrio splendidus (strain Mel32)), this protein is GMP reductase.